The sequence spans 390 residues: Multidrug export protein EmrA (390 aa).

At Met-1–Leu-24 the chain is on the cytoplasmic side. The helical transmembrane segment at Leu-25–Val-45 threads the bilayer. The Periplasmic portion of the chain corresponds to Leu-46–Gly-390. Positions Ile-120–Gln-180 form a coiled coil.

This sequence belongs to the membrane fusion protein (MFP) (TC 8.A.1) family. In terms of assembly, homodimer and homotrimer. Part of the tripartite efflux system EmrAB-TolC, which is composed of an inner membrane transporter, EmrB, a periplasmic membrane fusion protein, EmrA, and an outer membrane component, TolC. The complex forms a large protein conduit and can translocate molecules across both the inner and outer membranes. Interacts with EmrB. EmrAB complex forms a dimer in vitro.

It localises to the cell inner membrane. Part of the tripartite efflux system EmrAB-TolC, which confers resistance to antibiotics such as CCCP, FCCP, 2,4-dinitrophenol and nalidixic acid. EmrA is a drug-binding protein that provides a physical link between EmrB and TolC. The sequence is that of Multidrug export protein EmrA (emrA) from Escherichia coli (strain K12).